The following is a 301-amino-acid chain: Acetylglutamate kinase (301 aa).

Residues 72–73 (GG), Arg94, and Asn199 contribute to the substrate site.

Belongs to the acetylglutamate kinase family. ArgB subfamily.

The protein resides in the cytoplasm. It carries out the reaction N-acetyl-L-glutamate + ATP = N-acetyl-L-glutamyl 5-phosphate + ADP. It functions in the pathway amino-acid biosynthesis; L-arginine biosynthesis; N(2)-acetyl-L-ornithine from L-glutamate: step 2/4. Functionally, catalyzes the ATP-dependent phosphorylation of N-acetyl-L-glutamate. This Bartonella quintana (strain Toulouse) (Rochalimaea quintana) protein is Acetylglutamate kinase.